A 1150-amino-acid chain; its full sequence is Voltage-dependent calcium channel subunit alpha-2/delta-2 (1150 aa).

Residues 1–18 form the signal peptide; the sequence is MAVPARTCGASRPGPART. The segment at 1–41 is disordered; it reads MAVPARTCGASRPGPARTARPWPGCGPHPGPGTRRPTSGPP. Residues 19–1113 are Extracellular-facing; it reads ARPWPGCGPH…TEDTSDCGRG (1095 aa). Positions 291–469 constitute a VWFA domain; that stretch reads DMVIIVDVSG…INTQEYLDVL (179 aa). Residues D297, S299, and S301 each coordinate a divalent metal cation. An MIDAS-like motif motif is present at residues 297-301; sequence DVSGS. 6 N-linked (GlcNAc...) asparagine glycosylation sites follow: N386, N418, N507, N540, N624, and N861. C443 and C1098 form a disulfide bridge. The Cache domain maps to 485–574; that stretch reads WTNVYEDALG…KPQTTNFREP (90 aa). A helical transmembrane segment spans residues 1114–1134; the sequence is ASFPPSLGVLVSLQLLLLLGL. At 1135-1150 the chain is on the cytoplasmic side; that stretch reads PPRPQPQVLVHASRRL.

The protein belongs to the calcium channel subunit alpha-2/delta family. Dimer formed of alpha-2-2 and delta-2 chains; disulfide-linked. Voltage-dependent calcium channels are multisubunit complexes, consisting of alpha-1 (CACNA1), alpha-2 (CACNA2D), beta (CACNB) and delta (CACNA2D) subunits in a 1:1:1:1 ratio. May be proteolytically processed into subunits alpha-2-2 and delta-2 that are disulfide-linked. It is however unclear whether such cleavage really takes place in vivo and has a functional role. In terms of tissue distribution, predominantly present in cerebellar cortex. Present in various lung tumor cell lines, while it is absent in normal lung (at protein level). Highly expressed in heart, lung, testis, pancreas and skeletal muscle. Also expressed in kidney, liver, placenta and brain.

It localises to the membrane. The alpha-2/delta subunit of voltage-dependent calcium channels regulates calcium current density and activation/inactivation kinetics of the calcium channel. Acts as a regulatory subunit for P/Q-type calcium channel (CACNA1A), N-type (CACNA1B), L-type (CACNA1C OR CACNA1D) and possibly T-type (CACNA1G). Overexpression induces apoptosis. In Homo sapiens (Human), this protein is Voltage-dependent calcium channel subunit alpha-2/delta-2 (CACNA2D2).